The chain runs to 580 residues: Proline--tRNA ligase (580 aa).

The protein belongs to the class-II aminoacyl-tRNA synthetase family. ProS type 1 subfamily. As to quaternary structure, homodimer.

Its subcellular location is the cytoplasm. It carries out the reaction tRNA(Pro) + L-proline + ATP = L-prolyl-tRNA(Pro) + AMP + diphosphate. Functionally, catalyzes the attachment of proline to tRNA(Pro) in a two-step reaction: proline is first activated by ATP to form Pro-AMP and then transferred to the acceptor end of tRNA(Pro). As ProRS can inadvertently accommodate and process non-cognate amino acids such as alanine and cysteine, to avoid such errors it has two additional distinct editing activities against alanine. One activity is designated as 'pretransfer' editing and involves the tRNA(Pro)-independent hydrolysis of activated Ala-AMP. The other activity is designated 'posttransfer' editing and involves deacylation of mischarged Ala-tRNA(Pro). The misacylated Cys-tRNA(Pro) is not edited by ProRS. The chain is Proline--tRNA ligase from Albidiferax ferrireducens (strain ATCC BAA-621 / DSM 15236 / T118) (Rhodoferax ferrireducens).